The following is a 190-amino-acid chain: Threonylcarbamoyl-AMP synthase (190 aa).

The YrdC-like domain occupies 7 to 190 (GDAIAAAIDV…ALTGELFRQG (184 aa)).

This sequence belongs to the SUA5 family. TsaC subfamily.

It is found in the cytoplasm. It catalyses the reaction L-threonine + hydrogencarbonate + ATP = L-threonylcarbamoyladenylate + diphosphate + H2O. Functionally, required for the formation of a threonylcarbamoyl group on adenosine at position 37 (t(6)A37) in tRNAs that read codons beginning with adenine. Catalyzes the conversion of L-threonine, HCO(3)(-)/CO(2) and ATP to give threonylcarbamoyl-AMP (TC-AMP) as the acyladenylate intermediate, with the release of diphosphate. The polypeptide is Threonylcarbamoyl-AMP synthase (Shigella dysenteriae serotype 1 (strain Sd197)).